A 185-amino-acid chain; its full sequence is Peptidyl-tRNA hydrolase (185 aa).

Y14 serves as a coordination point for tRNA. The active-site Proton acceptor is the H19. Positions 65, 67, and 113 each coordinate tRNA.

The protein belongs to the PTH family. As to quaternary structure, monomer.

Its subcellular location is the cytoplasm. It carries out the reaction an N-acyl-L-alpha-aminoacyl-tRNA + H2O = an N-acyl-L-amino acid + a tRNA + H(+). Hydrolyzes ribosome-free peptidyl-tRNAs (with 1 or more amino acids incorporated), which drop off the ribosome during protein synthesis, or as a result of ribosome stalling. In terms of biological role, catalyzes the release of premature peptidyl moieties from peptidyl-tRNA molecules trapped in stalled 50S ribosomal subunits, and thus maintains levels of free tRNAs and 50S ribosomes. This Rickettsia felis (strain ATCC VR-1525 / URRWXCal2) (Rickettsia azadi) protein is Peptidyl-tRNA hydrolase.